The following is a 178-amino-acid chain: Deoxycytidylate deaminase (178 aa).

A CMP/dCMP-type deaminase domain is found at 14-146 (EWPEYFMAVA…EATAARLLFD (133 aa)). His-84 lines the Zn(2+) pocket. Glu-86 functions as the Proton donor in the catalytic mechanism. Zn(2+) is bound by residues Cys-110 and Cys-113. Residue Ser-174 is modified to Phosphoserine.

It belongs to the cytidine and deoxycytidylate deaminase family. In terms of assembly, homohexamer. Requires Zn(2+) as cofactor.

It carries out the reaction dCMP + H2O + H(+) = dUMP + NH4(+). The catalysed reaction is 5-hydroxymethyl-dCMP + H2O + H(+) = 5-hydroxymethyl-dUMP + NH4(+). Allosteric enzyme whose activity is greatly influenced by the end products of its metabolic pathway, dCTP and dTTP. Functionally, catalyzes the deamination of dCMP to dUMP, providing the nucleoside monophosphate substrate for the thymidylate synthase/TYMS. Also, part of a nucleotide salvage pathway that eliminates epigenetically modified 5-hydroxymethyl-dCMP (hmdCMP) in a two-step process entailing deamination to cytotoxic 5-hydroxymethyl-dUMP (hmdUMP), followed by its hydrolysis into 5-hydroxymethyluracil (hmU) and 2-deoxy-D-ribose 5-phosphate (deoxyribosephosphate). Catalyzes the first step in that pathway, the deamination of 5-hydroxymethyl-dCMP (hmdCMP). In Pongo abelii (Sumatran orangutan), this protein is Deoxycytidylate deaminase.